A 166-amino-acid polypeptide reads, in one-letter code: Tegument protein UL55 homolog (166 aa).

The protein belongs to the alphaherpesvirinae HHV-1 UL55 family.

Its subcellular location is the virion tegument. It localises to the host nucleus matrix. This is Tegument protein UL55 homolog (MDV070) from Gallid herpesvirus 2 (strain Chicken/Md5/ATCC VR-987) (GaHV-2).